We begin with the raw amino-acid sequence, 396 residues long: Elongation factor Tu (396 aa).

The 197-residue stretch at 10–206 (KPHVNIGTIG…ACDTYIPAPV (197 aa)) folds into the tr-type G domain. A G1 region spans residues 19 to 26 (GHVDHGKT). 19–26 (GHVDHGKT) lines the GTP pocket. Thr-26 lines the Mg(2+) pocket. The tract at residues 60-64 (GITIS) is G2. The interval 81-84 (DCPG) is G3. Residues 81 to 85 (DCPGH) and 136 to 139 (NKVD) each bind GTP. The interval 136 to 139 (NKVD) is G4. The G5 stretch occupies residues 174–176 (SAL).

It belongs to the TRAFAC class translation factor GTPase superfamily. Classic translation factor GTPase family. EF-Tu/EF-1A subfamily. As to quaternary structure, monomer.

It is found in the cytoplasm. The enzyme catalyses GTP + H2O = GDP + phosphate + H(+). Functionally, GTP hydrolase that promotes the GTP-dependent binding of aminoacyl-tRNA to the A-site of ribosomes during protein biosynthesis. In Bdellovibrio bacteriovorus (strain ATCC 15356 / DSM 50701 / NCIMB 9529 / HD100), this protein is Elongation factor Tu.